We begin with the raw amino-acid sequence, 506 residues long: MSIRPEEISSILKQEIERFSTEIETSNVGRVIQVGDGIARVYGLQSCMASELLEFPNGIMGMAFNLEEDNIGVVILGPDEDIKEGMEVRRTGRVVEVPVGPALIGRVVNALGEPLDGKGPIETDMYLPVERKAPGVITRKSVHEPLQTGLKAIDSMTPIGRGQRELIIGDRGTGKTAIAVDTIINQKGQNCICIYVGIGQKASTIAGVVKKLQETGAMEYTIVVSATASDPAPLQFLAPYAGCAMGEYFRDNGMHALIVYDDLSKHAVAYREMSLLMRRPPGREAYPGDVFYLHSRLLERAAKMSDEYGAGSLTALPIIETQAGDVSAYIPTNVISITDGQIFLETDLFNAGVRPAINVGISVSRVGGAAQIDSMKRVSGTLKLDLAQYRELAAFAQFGSDLDKATQARIIRGQRTTEILKQPQYHPLPVELQVLSIFAATNGYLDDLELEEVAAFEQELHTYFKANHPELLARIPKEKWKDIEPEVRAAVDAFKKGYGQRAAANQ.

169–176 contributes to the ATP binding site; the sequence is GDRGTGKT.

This sequence belongs to the ATPase alpha/beta chains family. In terms of assembly, F-type ATPases have 2 components, CF(1) - the catalytic core - and CF(0) - the membrane proton channel. CF(1) has five subunits: alpha(3), beta(3), gamma(1), delta(1), epsilon(1). CF(0) has three main subunits: a(1), b(2) and c(9-12). The alpha and beta chains form an alternating ring which encloses part of the gamma chain. CF(1) is attached to CF(0) by a central stalk formed by the gamma and epsilon chains, while a peripheral stalk is formed by the delta and b chains.

It localises to the cell membrane. It catalyses the reaction ATP + H2O + 4 H(+)(in) = ADP + phosphate + 5 H(+)(out). Its function is as follows. Produces ATP from ADP in the presence of a proton gradient across the membrane. The alpha chain is a regulatory subunit. This Symbiobacterium thermophilum (strain DSM 24528 / JCM 14929 / IAM 14863 / T) protein is ATP synthase subunit alpha.